Here is a 199-residue protein sequence, read N- to C-terminus: UPF0637 protein LACR_1918 (199 aa).

Belongs to the UPF0637 family.

This is UPF0637 protein LACR_1918 from Lactococcus lactis subsp. cremoris (strain SK11).